The primary structure comprises 214 residues: Probable transaldolase (214 aa).

K83 acts as the Schiff-base intermediate with substrate in catalysis.

It belongs to the transaldolase family. Type 3B subfamily.

It is found in the cytoplasm. It carries out the reaction D-sedoheptulose 7-phosphate + D-glyceraldehyde 3-phosphate = D-erythrose 4-phosphate + beta-D-fructose 6-phosphate. Its pathway is carbohydrate degradation; pentose phosphate pathway; D-glyceraldehyde 3-phosphate and beta-D-fructose 6-phosphate from D-ribose 5-phosphate and D-xylulose 5-phosphate (non-oxidative stage): step 2/3. Transaldolase is important for the balance of metabolites in the pentose-phosphate pathway. In Leptospira borgpetersenii serovar Hardjo-bovis (strain JB197), this protein is Probable transaldolase.